Consider the following 107-residue polypeptide: MSSEDGIKKLLDAERTAQKIVADARQDRVQKLKKAVEEAEKEIKEFREKKDKEYKEYESKYLGASSETASQLATNANKEIDTIRNETAANKQKVVDLLIKYAITCDN.

The protein belongs to the V-ATPase G subunit family. As to quaternary structure, V-ATPase is a heteromultimeric enzyme composed of a peripheral catalytic V1 complex (components A to H) attached to an integral membrane V0 proton pore complex (components: a, c, c', c'' and d).

Functionally, catalytic subunit of the peripheral V1 complex of vacuolar ATPase (V-ATPase). V-ATPase is responsible for acidifying a variety of intracellular compartments in eukaryotic cells. This is V-type proton ATPase subunit G (atp6v1g) from Dictyostelium discoideum (Social amoeba).